We begin with the raw amino-acid sequence, 237 residues long: Trypsin-1 (237 aa).

The Peptidase S1 domain maps to 1–237; it reads IVGGTDAVLG…HVDWIKANAV (237 aa). C30 and C46 are joined by a disulfide. H45 (charge relay system) is an active-site residue. The Ca(2+) site is built by E64, V69, and E74. The active-site Charge relay system is the D96. 2 disulfides stabilise this stretch: C159–C174 and C185–C213. Residue S189 is the Charge relay system of the active site.

This sequence belongs to the peptidase S1 family. The cofactor is Ca(2+).

Its subcellular location is the secreted. The protein localises to the extracellular space. The enzyme catalyses Preferential cleavage: Arg-|-Xaa, Lys-|-Xaa.. The polypeptide is Trypsin-1 (Astacus astacus (Noble crayfish)).